The primary structure comprises 1308 residues: Receptor tyrosine-protein kinase erbB-4 (1308 aa).

The first 25 residues, 1–25, serve as a signal peptide directing secretion; that stretch reads MKLATGLWVWGSLLMAAGTVQPSAS. At 26 to 652 the chain is on the extracellular side; sequence QSVCAGTENK…TLPQHARTPL (627 aa). The cysteines at positions 29 and 56 are disulfide-linked. N-linked (GlcNAc...) asparagine glycosylation is found at Asn138, Asn174, and Asn181. 12 cysteine pairs are disulfide-bonded: Cys156/Cys186, Cys189/Cys197, Cys193/Cys205, Cys213/Cys221, Cys217/Cys229, Cys230/Cys238, Cys234/Cys246, Cys249/Cys258, Cys262/Cys289, Cys293/Cys304, Cys308/Cys323, and Cys326/Cys330. Asn253 carries N-linked (GlcNAc...) asparagine glycosylation. 3 N-linked (GlcNAc...) asparagine glycosylation sites follow: Asn410, Asn473, and Asn495. 10 disulfide bridges follow: Cys503–Cys512, Cys507–Cys520, Cys523–Cys532, Cys536–Cys552, Cys555–Cys569, Cys559–Cys577, Cys580–Cys589, Cys593–Cys614, Cys617–Cys625, and Cys621–Cys633. N-linked (GlcNAc...) asparagine glycosylation is present at Asn548. The N-linked (GlcNAc...) asparagine glycan is linked to Asn576. N-linked (GlcNAc...) asparagine glycosylation is present at Asn620. The segment at 653–673 is a transmembrane helix; sequence IAAGVIGGLFILVIMALTFAV. The Cytoplasmic segment spans residues 674–1308; it reads YVRRKSIKKK…PPYRHRNTVV (635 aa). The Nuclear localization signal motif lies at 676–684; that stretch reads RRKSIKKKR. One can recognise a Protein kinase domain in the interval 718 to 985; sequence LKRVKVLGSG…RMARDPQRYL (268 aa). ATP is bound by residues 724–732, Lys751, 797–799, and 843–848; these read LGSGAFGTV, QLM, and DLAARN. The active-site Proton acceptor is Asp843. Phosphotyrosine; by autocatalysis occurs at positions 875, 1035, and 1056. The short motif at 1032–1035 is the PPxy motif 1 element; it reads PPIY. Residues 1117 to 1149 are disordered; it reads PHVQEDSSTQRYSADPTVFAPERNPRGELDEEG. Residues Tyr1150, Tyr1162, Tyr1188, Tyr1202, Tyr1242, Tyr1258, and Tyr1284 each carry the phosphotyrosine; by autocatalysis modification. The PPxY motif 2 motif lies at 1282–1285; sequence PEYL. The PDZ-binding signature appears at 1290 to 1292; it reads LKP.

Belongs to the protein kinase superfamily. Tyr protein kinase family. EGF receptor subfamily. Monomer in the absence of bound ligand. Homodimer or heterodimer with another ERBB family member upon ligand binding, thus forming heterotetramers. Interacts with EGFR and ERBB2. Interacts with DLG2 (via its PDZ domain), DLG3 (via its PDZ domain), DLG4 (via its PDZ domain) and SNTB2 (via its PDZ domain). Interacts with MUC1. Interacts (via its PPxy motifs) with WWOX. Interacts (via the PPxY motif 3 of isoform JM-A CYT-2) with YAP1 (via the WW domain 1 of isoform 1). Interacts (isoform JM-A CYT-1 and isoform JM-B CYT-1) with WWP1. Interacts (via its intracellular domain) with TRIM28. Interacts (via the intracellular domains of both CYT-1 and CYT-2 isoforms) with KAP1; the interaction does not phosphorylate KAP1 but represses ERBB4-mediated transcriptional activity. Interacts with PRPU, DDX23, MATR3, RBM15, ILF3, KAP1, U5S1, U2SURP, ITCH, HNRNPU, AP2A1, NULC, LEO1, WWP2, IGHG1, HXK1, GRB7 and SRRT. Interacts (phosphorylated isoform JM-A CYT-1 and isoform JM-B CYT-1) with PIK3R1. Interacts with SHC1. Interacts with GRB2. Interacts (soluble intracellular domain) with BCL2. Interacts (phosphorylated) with STAT1. Interacts with CBFA2T3. Interacts (soluble intracellular domain) with STAT5A. Isoform JM-A CYT-1 and isoform JM-A CYT-2 are processed by ADAM17. Proteolytic processing in response to ligand or 12-O-tetradecanoylphorbol-13-acetate stimulation results in the production of 120 kDa soluble receptor forms and intermediate membrane-anchored 80 kDa fragments (m80HER4), which are further processed by a presenilin-dependent gamma-secretase to release a cytoplasmic intracellular domain (E4ICD; E4ICD1/s80Cyt1 or E4ICD2/s80Cyt2, depending on the isoform). Membrane-anchored 80 kDa fragments of the processed isoform JM-A CYT-1 are more readily degraded by the proteasome than fragments of isoform JM-A CYT-2, suggesting a prevalence of E4ICD2 over E4ICD1. Isoform JM-B CYT-1 and isoform JM-B CYT-2 lack the ADAM17 cleavage site and are not processed by ADAM17, precluding further processing by gamma-secretase. Post-translationally, autophosphorylated on tyrosine residues in response to ligand binding. Autophosphorylation occurs in trans, i.e. one subunit of the dimeric receptor phosphorylates tyrosine residues on the other subunit. Ligands trigger phosphorylation at specific tyrosine residues, thereby creating binding sites for scaffold proteins and effectors. Constitutively phosphorylated at a basal level when overexpressed in heterologous systems; ligand binding leads to increased phosphorylation. Phosphorylation at Tyr-1035 is important for interaction with STAT1. Phosphorylation at Tyr-1056 is important for interaction with PIK3R1. Phosphorylation at Tyr-1242 is important for interaction with SHC1. Phosphorylation at Tyr-1188 may also contribute to the interaction with SHC1. Isoform JM-A CYT-2 is constitutively phosphorylated on tyrosine residues in a ligand-independent manner. E4ICD2 but not E4ICD1 is phosphorylated on tyrosine residues. In terms of processing, ubiquitinated. During mitosis, the ERBB4 intracellular domain is ubiquitinated by the APC/C complex and targeted to proteasomal degradation. Isoform JM-A CYT-1 and isoform JM-B CYT-1 are ubiquitinated by WWP1. The ERBB4 intracellular domain (E4ICD1) is ubiquitinated, and this involves NEDD4. Isoform JM-A CYT-2 and isoform JM-B CYT-2 are expressed in cerebellum, cerebral cortex, spinal cord, medulla oblongata and eye, but the kidney expresses solely isoform JM-A CYT-2 and the heart solely isoform JM-B CYT-2.

It is found in the cell membrane. Its subcellular location is the nucleus. It localises to the mitochondrion. It catalyses the reaction L-tyrosyl-[protein] + ATP = O-phospho-L-tyrosyl-[protein] + ADP + H(+). Binding of a cognate ligand leads to dimerization and activation by autophosphorylation on tyrosine residues. In vitro kinase activity is increased by Mg(2+). Its function is as follows. Tyrosine-protein kinase that plays an essential role as cell surface receptor for neuregulins and EGF family members and regulates development of the heart, the central nervous system and the mammary gland, gene transcription, cell proliferation, differentiation, migration and apoptosis. Required for normal cardiac muscle differentiation during embryonic development, and for postnatal cardiomyocyte proliferation. Required for normal development of the embryonic central nervous system, especially for normal neural crest cell migration and normal axon guidance. Required for mammary gland differentiation, induction of milk proteins and lactation. Acts as cell-surface receptor for the neuregulins NRG1, NRG2, NRG3 and NRG4 and the EGF family members BTC, EREG and HBEGF. Ligand binding triggers receptor dimerization and autophosphorylation at specific tyrosine residues that then serve as binding sites for scaffold proteins and effectors. Ligand specificity and signaling is modulated by alternative splicing, proteolytic processing, and by the formation of heterodimers with other ERBB family members, thereby creating multiple combinations of intracellular phosphotyrosines that trigger ligand- and context-specific cellular responses. Mediates phosphorylation of SHC1 and activation of the MAP kinases MAPK1/ERK2 and MAPK3/ERK1. Isoform JM-A CYT-1 and isoform JM-B CYT-1 phosphorylate PIK3R1, leading to the activation of phosphatidylinositol 3-kinase and AKT1 and protect cells against apoptosis. Isoform JM-A CYT-1 and isoform JM-B CYT-1 mediate reorganization of the actin cytoskeleton and promote cell migration in response to NRG1. Isoform JM-A CYT-2 and isoform JM-B CYT-2 lack the phosphotyrosine that mediates interaction with PIK3R1, and hence do not phosphorylate PIK3R1, do not protect cells against apoptosis, and do not promote reorganization of the actin cytoskeleton and cell migration. Proteolytic processing of isoform JM-A CYT-1 and isoform JM-A CYT-2 gives rise to the corresponding soluble intracellular domains (4ICD) that translocate to the nucleus, promote nuclear import of STAT5A, activation of STAT5A, mammary epithelium differentiation, cell proliferation and activation of gene expression. The ERBB4 soluble intracellular domains (4ICD) colocalize with STAT5A at the CSN2 promoter to regulate transcription of milk proteins during lactation. The ERBB4 soluble intracellular domains can also translocate to mitochondria and promote apoptosis. The chain is Receptor tyrosine-protein kinase erbB-4 (Erbb4) from Mus musculus (Mouse).